A 179-amino-acid chain; its full sequence is Large ribosomal subunit protein uL6 (179 aa).

This sequence belongs to the universal ribosomal protein uL6 family. As to quaternary structure, part of the 50S ribosomal subunit.

Its function is as follows. This protein binds to the 23S rRNA, and is important in its secondary structure. It is located near the subunit interface in the base of the L7/L12 stalk, and near the tRNA binding site of the peptidyltransferase center. The polypeptide is Large ribosomal subunit protein uL6 (Geobacter metallireducens (strain ATCC 53774 / DSM 7210 / GS-15)).